The sequence spans 213 residues: ATP-dependent Clp protease proteolytic subunit (213 aa).

S114 serves as the catalytic Nucleophile. The active site involves H139.

It belongs to the peptidase S14 family. In terms of assembly, fourteen ClpP subunits assemble into 2 heptameric rings which stack back to back to give a disk-like structure with a central cavity, resembling the structure of eukaryotic proteasomes.

The protein resides in the cytoplasm. The catalysed reaction is Hydrolysis of proteins to small peptides in the presence of ATP and magnesium. alpha-casein is the usual test substrate. In the absence of ATP, only oligopeptides shorter than five residues are hydrolyzed (such as succinyl-Leu-Tyr-|-NHMec, and Leu-Tyr-Leu-|-Tyr-Trp, in which cleavage of the -Tyr-|-Leu- and -Tyr-|-Trp bonds also occurs).. Functionally, cleaves peptides in various proteins in a process that requires ATP hydrolysis. Has a chymotrypsin-like activity. Plays a major role in the degradation of misfolded proteins. The chain is ATP-dependent Clp protease proteolytic subunit from Methylobacillus flagellatus (strain ATCC 51484 / DSM 6875 / VKM B-1610 / KT).